A 300-amino-acid chain; its full sequence is Ribosomal protein bS6--L-glutamate ligase (300 aa).

Positions 104-287 (MQLLARQGID…IAGKMIRWIE (184 aa)) constitute an ATP-grasp domain. ATP contacts are provided by residues Lys141, 178-179 (EY), Asp187, and 211-213 (RSN). Residues Asp248, Glu260, and Asn262 each contribute to the Mg(2+) site. Residues Asp248, Glu260, and Asn262 each contribute to the Mn(2+) site.

This sequence belongs to the RimK family. Mg(2+) is required as a cofactor. Requires Mn(2+) as cofactor.

An L-glutamate ligase that catalyzes the ATP-dependent post-translational addition of glutamate residues to the C-terminus of ribosomal protein bS6 (RpsF). Is also able to catalyze the synthesis of poly-alpha-glutamate in vitro, via ATP hydrolysis from unprotected glutamate as substrate. The number of glutamate residues added to either RpsF or to poly-alpha-glutamate changes with pH. The polypeptide is Ribosomal protein bS6--L-glutamate ligase (Shigella boydii serotype 18 (strain CDC 3083-94 / BS512)).